Consider the following 739-residue polypeptide: Phosphoribosylformylglycinamidine synthase subunit PurL (739 aa).

His54 is an active-site residue. Residues Tyr57 and Lys96 each coordinate ATP. Residue Glu98 coordinates Mg(2+). Substrate is bound by residues 99-102 and Arg121; that span reads SHNH. The Proton acceptor role is filled by His100. Asp122 contacts Mg(2+). Residue Gln245 participates in substrate binding. Asp275 contributes to the Mg(2+) binding site. Substrate is bound at residue 319 to 321; it reads ESQ. Residues Asp504 and Gly541 each coordinate ATP. Asn542 is a Mg(2+) binding site. Substrate is bound at residue Ser544.

It belongs to the FGAMS family. In terms of assembly, monomer. Part of the FGAM synthase complex composed of 1 PurL, 1 PurQ and 2 PurS subunits.

The protein localises to the cytoplasm. The enzyme catalyses N(2)-formyl-N(1)-(5-phospho-beta-D-ribosyl)glycinamide + L-glutamine + ATP + H2O = 2-formamido-N(1)-(5-O-phospho-beta-D-ribosyl)acetamidine + L-glutamate + ADP + phosphate + H(+). It participates in purine metabolism; IMP biosynthesis via de novo pathway; 5-amino-1-(5-phospho-D-ribosyl)imidazole from N(2)-formyl-N(1)-(5-phospho-D-ribosyl)glycinamide: step 1/2. In terms of biological role, part of the phosphoribosylformylglycinamidine synthase complex involved in the purines biosynthetic pathway. Catalyzes the ATP-dependent conversion of formylglycinamide ribonucleotide (FGAR) and glutamine to yield formylglycinamidine ribonucleotide (FGAM) and glutamate. The FGAM synthase complex is composed of three subunits. PurQ produces an ammonia molecule by converting glutamine to glutamate. PurL transfers the ammonia molecule to FGAR to form FGAM in an ATP-dependent manner. PurS interacts with PurQ and PurL and is thought to assist in the transfer of the ammonia molecule from PurQ to PurL. The polypeptide is Phosphoribosylformylglycinamidine synthase subunit PurL (Lactococcus lactis subsp. cremoris (strain SK11)).